The primary structure comprises 97 residues: MQFHTGLLLAAVLSLQLAAAQALWCHQCTGFGGCSRGSRCPRDSTHCVTTATRVLSNIENLPLVTKMCHTGCPDIPSLGLGPYVSIACCQTSLCNHD.

The N-terminal stretch at 1–22 is a signal peptide; the sequence is MQFHTGLLLAAVLSLQLAAAQA. Positions 23–95 constitute a UPAR/Ly6 domain; it reads LWCHQCTGFG…IACCQTSLCN (73 aa). 5 cysteine pairs are disulfide-bonded: Cys-25/Cys-47, Cys-28/Cys-34, Cys-40/Cys-68, Cys-72/Cys-88, and Cys-89/Cys-94.

As to quaternary structure, interacts with CHRNA3, CHRNA4, CHRNA5, CHRNA7, CHRNB2 and CHRNB4. Interacts with CHRM1 and CHRM3 probably in an allosteric manner.

Its subcellular location is the secreted. Its function is as follows. Binds and may modulate the functional properties of nicotinic and muscarinic acetylcholine receptors. May regulate keratinocytes proliferation, differentiation and apoptosis. In vitro moderately inhibits ACh-evoked currents of alpha-3:beta-2-containing nAChRs, strongly these of alpha-4:beta-2-containing nAChRs, modulates alpha-7-containing nAChRs, and inhibits nicotine-induced signaling probably implicating alpha-3:beta-4-containing nAChRs. Proposed to act on alpha-3:beta-2 and alpha-7 nAChRs in an orthosteric, and on mAChRs, such as CHRM1 and CHRM3, in an allosteric manner. The sequence is that of Secreted Ly-6/uPAR domain-containing protein 2 from Macaca mulatta (Rhesus macaque).